Consider the following 463-residue polypeptide: Abscisic acid 8'-hydroxylase 3 (463 aa).

The chain crosses the membrane as a helical span at residues 6 to 26 (LFLTLSAAALFLCLLRFIAGV). Cysteine 411 contacts heme.

The protein belongs to the cytochrome P450 family. The cofactor is heme. In terms of tissue distribution, mainly expressed in flower buds, flowers, rosette leaves and roots. Lower expression in mature siliques and inflorescence stems. Not expressed in dry seeds.

Its subcellular location is the membrane. The catalysed reaction is 2-cis-(+)-abscisate + reduced [NADPH--hemoprotein reductase] + O2 = (+)-8'-hydroxyabscisate + oxidized [NADPH--hemoprotein reductase] + H2O + H(+). The protein operates within plant hormone degradation; abscisic acid degradation. Inhibited by tetcyclcis, but not by metyrapone. Functionally, involved in the oxidative degradation of abscisic acid, but not in the isomerization of the produced 8'-hydroxyabscisic acid (8'-OH-ABA) to (-)-phaseic acid (PA). Involved in the control of postgermination growth. The chain is Abscisic acid 8'-hydroxylase 3 (CYP707A3) from Arabidopsis thaliana (Mouse-ear cress).